Here is a 195-residue protein sequence, read N- to C-terminus: Molybdenum cofactor guanylyltransferase (195 aa).

GTP contacts are provided by residues 10-12, K23, N51, D69, and D99; that span reads LAG. D99 serves as a coordination point for Mg(2+).

This sequence belongs to the MobA family. In terms of assembly, monomer. Mg(2+) serves as cofactor.

It localises to the cytoplasm. The catalysed reaction is Mo-molybdopterin + GTP + H(+) = Mo-molybdopterin guanine dinucleotide + diphosphate. Its function is as follows. Transfers a GMP moiety from GTP to Mo-molybdopterin (Mo-MPT) cofactor (Moco or molybdenum cofactor) to form Mo-molybdopterin guanine dinucleotide (Mo-MGD) cofactor. This chain is Molybdenum cofactor guanylyltransferase, found in Yersinia pestis bv. Antiqua (strain Antiqua).